A 39-amino-acid polypeptide reads, in one-letter code: Photosystem II reaction center protein X (39 aa).

The chain crosses the membrane as a helical span at residues 10–30 (WSLVLGAAIVLIPATIGLIFI).

Belongs to the PsbX family. Type 1 subfamily. As to quaternary structure, PSII is composed of 1 copy each of membrane proteins PsbA, PsbB, PsbC, PsbD, PsbE, PsbF, PsbH, PsbI, PsbJ, PsbK, PsbL, PsbM, PsbT, PsbX, PsbY, PsbZ, Psb30/Ycf12, peripheral proteins PsbO, CyanoQ (PsbQ), PsbU, PsbV and a large number of cofactors. It forms dimeric complexes.

It is found in the cellular thylakoid membrane. Involved in the binding and/or turnover of quinones at the Q(B) site of photosystem II (PSII). PSII is a light-driven water plastoquinone oxidoreductase, using light energy to abstract electrons from H(2)O, generating a proton gradient subsequently used for ATP formation. This Microcystis aeruginosa (strain NIES-843 / IAM M-2473) protein is Photosystem II reaction center protein X.